A 329-amino-acid polypeptide reads, in one-letter code: Quinone-oxidoreductase homolog, chloroplastic (329 aa).

This sequence belongs to the zinc-containing alcohol dehydrogenase family. Quinone oxidoreductase subfamily. Post-translationally, the transit peptide is not cleaved.

It is found in the plastid. Its subcellular location is the chloroplast inner membrane. This Spinacia oleracea (Spinach) protein is Quinone-oxidoreductase homolog, chloroplastic (QOR).